Reading from the N-terminus, the 89-residue chain is Translation initiation factor IF-1 1 (89 aa).

Residues 1–73 (MSNKEQLIEM…TKGRITFRHL (73 aa)) enclose the S1-like domain.

Belongs to the IF-1 family. Component of the 30S ribosomal translation pre-initiation complex which assembles on the 30S ribosome in the order IF-2 and IF-3, IF-1 and N-formylmethionyl-tRNA(fMet); mRNA recruitment can occur at any time during PIC assembly.

Its subcellular location is the cytoplasm. In terms of biological role, one of the essential components for the initiation of protein synthesis. Stabilizes the binding of IF-2 and IF-3 on the 30S subunit to which N-formylmethionyl-tRNA(fMet) subsequently binds. Helps modulate mRNA selection, yielding the 30S pre-initiation complex (PIC). Upon addition of the 50S ribosomal subunit IF-1, IF-2 and IF-3 are released leaving the mature 70S translation initiation complex. The sequence is that of Translation initiation factor IF-1 1 from Acidovorax sp. (strain JS42).